Here is a 492-residue protein sequence, read N- to C-terminus: Histone-lysine N-methyltransferase SUVR4 (492 aa).

The segment at 112-138 is disordered; that stretch reads ETRSASSGSSIQVVQKQPQLSNGDRKR. Residues 113-133 show a composition bias toward polar residues; it reads TRSASSGSSIQVVQKQPQLSN. 9 residues coordinate Zn(2+): Cys-196, Cys-197, Cys-200, Cys-204, Cys-213, Cys-281, Cys-285, Cys-287, and Cys-291. In terms of domain architecture, Pre-SET spans 196–299; that stretch reads CCANCKGNCL…QCGNRVVQRG (104 aa). In terms of domain architecture, SET spans 302–435; the sequence is CQLQVYFTQE…AMDELTWDYM (134 aa). S-adenosyl-L-methionine-binding positions include 313-315 and 391-392; these read KGW and NH. Position 394 (Cys-394) interacts with Zn(2+). Tyr-434 is an S-adenosyl-L-methionine binding site. The 17-residue stretch at 446–462 folds into the Post-SET domain; the sequence is KAFRCCCGSESCRDRKI. Zn(2+) contacts are provided by Cys-450, Cys-452, and Cys-457. Positions 463–492 are disordered; sequence KGSQGKSIERRKIVSAKKQQGSKEVSKKRK.

Belongs to the class V-like SAM-binding methyltransferase superfamily. Histone-lysine methyltransferase family. As to quaternary structure, interacts with ubiquitin.

The protein resides in the nucleus. It is found in the chromosome. The enzyme catalyses N(6)-methyl-L-lysyl(9)-[histone H3] + S-adenosyl-L-methionine = N(6),N(6)-dimethyl-L-lysyl(9)-[histone H3] + S-adenosyl-L-homocysteine + H(+). It catalyses the reaction N(6),N(6)-dimethyl-L-lysyl(9)-[histone H3] + S-adenosyl-L-methionine = N(6),N(6),N(6)-trimethyl-L-lysyl(9)-[histone H3] + S-adenosyl-L-homocysteine + H(+). In terms of biological role, histone methyltransferase that converts monomethylated 'Lys-9' of histone H3 (H3K9me1) to dimethylated 'Lys-9' (H3K9me2) in the absence of bound ubiquitin, and to trimethylated 'Lys-9' (H3K9me3) in the presence of bound ubiquitin. Acts in a locus-specific manner and contributes to the transcriptional silencing of pseudogenes and transposons. H3 'Lys-9' methylation represents a specific tag for epigenetic transcriptional repression. The protein is Histone-lysine N-methyltransferase SUVR4 (SUVR4) of Arabidopsis thaliana (Mouse-ear cress).